A 323-amino-acid chain; its full sequence is Beta-ketoacyl-[acyl-carrier-protein] synthase III (323 aa).

Catalysis depends on residues C113 and H250. Positions 251–255 (QANLR) are ACP-binding. The active site involves N280.

The protein belongs to the thiolase-like superfamily. FabH family. In terms of assembly, homodimer.

Its subcellular location is the cytoplasm. The enzyme catalyses malonyl-[ACP] + acetyl-CoA + H(+) = 3-oxobutanoyl-[ACP] + CO2 + CoA. It participates in lipid metabolism; fatty acid biosynthesis. In terms of biological role, catalyzes the condensation reaction of fatty acid synthesis by the addition to an acyl acceptor of two carbons from malonyl-ACP. Catalyzes the first condensation reaction which initiates fatty acid synthesis and may therefore play a role in governing the total rate of fatty acid production. Possesses both acetoacetyl-ACP synthase and acetyl transacylase activities. Its substrate specificity determines the biosynthesis of branched-chain and/or straight-chain of fatty acids. The protein is Beta-ketoacyl-[acyl-carrier-protein] synthase III of Paracoccus denitrificans (strain Pd 1222).